Reading from the N-terminus, the 52-residue chain is Large ribosomal subunit protein bL33 (52 aa).

This sequence belongs to the bacterial ribosomal protein bL33 family.

The protein is Large ribosomal subunit protein bL33 of Chlamydia abortus (strain DSM 27085 / S26/3) (Chlamydophila abortus).